The chain runs to 275 residues: Large ribosomal subunit protein uL2 (275 aa).

Residues 38–53 (SSKAGRNNNGRITTRH) are compositionally biased toward polar residues. Disordered stretches follow at residues 38 to 59 (SSKAGRNNNGRITTRHQGGGHK) and 224 to 257 (AMNPIDHPHGGGEGRTAAGRDPVSPWGTPTKGFR).

Belongs to the universal ribosomal protein uL2 family. As to quaternary structure, part of the 50S ribosomal subunit. Forms a bridge to the 30S subunit in the 70S ribosome.

Functionally, one of the primary rRNA binding proteins. Required for association of the 30S and 50S subunits to form the 70S ribosome, for tRNA binding and peptide bond formation. It has been suggested to have peptidyltransferase activity; this is somewhat controversial. Makes several contacts with the 16S rRNA in the 70S ribosome. This Burkholderia multivorans (strain ATCC 17616 / 249) protein is Large ribosomal subunit protein uL2.